A 352-amino-acid chain; its full sequence is Molybdenum import ATP-binding protein ModC (352 aa).

Positions M1–E229 constitute an ABC transporter domain. G31 to T38 is an ATP binding site. In terms of domain architecture, Mop spans Q289 to A352.

Belongs to the ABC transporter superfamily. Molybdate importer (TC 3.A.1.8) family. In terms of assembly, the complex is composed of two ATP-binding proteins (ModC), two transmembrane proteins (ModB) and a solute-binding protein (ModA).

The protein resides in the cell inner membrane. The enzyme catalyses molybdate(out) + ATP + H2O = molybdate(in) + ADP + phosphate + H(+). Part of the ABC transporter complex ModABC involved in molybdenum import. Responsible for energy coupling to the transport system. The sequence is that of Molybdenum import ATP-binding protein ModC from Shigella flexneri.